Reading from the N-terminus, the 255-residue chain is 14-3-3-like protein B (255 aa).

This sequence belongs to the 14-3-3 family.

This chain is 14-3-3-like protein B, found in Nicotiana tabacum (Common tobacco).